Here is a 1426-residue protein sequence, read N- to C-terminus: Phospholipid-transporting ATPase VD (1426 aa).

The Cytoplasmic portion of the chain corresponds to 1-97 (MTEALQWARY…PRNLFEQFHR (97 aa)). Residues 98 to 118 (AANLYFLFLVVLNWVPLVEAF) form a helical membrane-spanning segment. Topologically, residues 119–121 (QKE) are exoplasmic loop. Residues 122 to 142 (ITMLPLVVVLTIIAIKDGLED) traverse the membrane as a helical segment. Residues 143 to 321 (YRKYKIDKQI…SKLERRANTD (179 aa)) are Cytoplasmic-facing. A helical transmembrane segment spans residues 322 to 342 (VLWCVMLLVIMCLTGAVGHGI). Topologically, residues 343–365 (WLSRYEKMHFFNVPEPDGHIISP) are exoplasmic loop. The helical transmembrane segment at 366–386 (LLAGFYMFWTMIILLQVLIPI) threads the bilayer. Residues 387-1113 (SLYVSIEIVK…HWCYTRLSNM (727 aa)) are Cytoplasmic-facing. Residue aspartate 438 is the 4-aspartylphosphate intermediate of the active site. Residues aspartate 438, lysine 439, and threonine 440 each coordinate ATP. Residue aspartate 438 participates in Mg(2+) binding. Threonine 440 serves as a coordination point for Mg(2+). The tract at residues 506 to 531 (NGPLGNKPSNHLAGSSFTLGSGEGAS) is disordered. The span at 512–524 (KPSNHLAGSSFTL) shows a compositional bias: polar residues. Residues glutamate 730, phenylalanine 772, lysine 796, arginine 840, threonine 920, glycine 921, aspartate 922, 996–1003 (GLIITGKT), arginine 1030, and lysine 1036 contribute to the ATP site. Aspartate 1056 provides a ligand contact to Mg(2+). 2 residues coordinate ATP: asparagine 1059 and aspartate 1060. Aspartate 1060 is a binding site for Mg(2+). A helical membrane pass occupies residues 1114–1134 (ILYFFYKNVAYVNLLFWYQFF). At 1135-1145 (CGFSGTSMTDY) the chain is on the exoplasmic loop side. Residues 1146–1166 (WVLIFFNLLFTSAPPVIYGVL) traverse the membrane as a helical segment. The Cytoplasmic segment spans residues 1167–1195 (EKDVSAETLMQLPELYRSGQKSEAYLPHT). The helical transmembrane segment at 1196-1216 (FWITLLDAFYQSLVCFFVPYF) threads the bilayer. At 1217–1224 (TYQGSDTD) the chain is on the exoplasmic loop side. The chain crosses the membrane as a helical span at residues 1225–1245 (IFAFGNPLNTAALFIVLLHLV). The Cytoplasmic segment spans residues 1246 to 1252 (IESKSLT). Residues 1253–1273 (WIHLLVIIGSILSYFLFAIVF) traverse the membrane as a helical segment. Over 1274 to 1292 (GAMCVTCNPPSNPYWIMQE) the chain is Exoplasmic loop. A helical membrane pass occupies residues 1293 to 1313 (HMLDPVFYLVCILTTSIALLP). The Cytoplasmic portion of the chain corresponds to 1314 to 1426 (RFVYRVLQGS…MAGPSKGKES (113 aa)). 1364–1371 (ANQSAGKS) provides a ligand contact to ATP.

The protein belongs to the cation transport ATPase (P-type) (TC 3.A.3) family. Type IV subfamily. As to quaternary structure, component of a P4-ATPase flippase complex which consists of a catalytic alpha subunit ATP10A and an accessory beta subunit TMEM30A. Mg(2+) is required as a cofactor. Post-translationally, autophosphorylated at the conserved aspartate of the P-type ATPase signature sequence. Expressed in placenta and, to a lesser extent, in kidney.

It is found in the cell membrane. Its subcellular location is the endoplasmic reticulum membrane. The enzyme catalyses ATP + H2O + phospholipidSide 1 = ADP + phosphate + phospholipidSide 2.. The catalysed reaction is a beta-D-glucosyl-(1&lt;-&gt;1')-N-acylsphing-4-enine(out) + ATP + H2O = a beta-D-glucosyl-(1&lt;-&gt;1')-N-acylsphing-4-enine(in) + ADP + phosphate + H(+). Catalytic component of a P4-ATPase flippase complex, which catalyzes the hydrolysis of ATP coupled to the transport of glucosylceramide (GlcCer) from the outer to the inner leaflet of the plasma membrane. The polypeptide is Phospholipid-transporting ATPase VD (Homo sapiens (Human)).